A 285-amino-acid chain; its full sequence is Nucleotide-binding protein PFLU_0879 (285 aa).

8–15 (GRSGSGKS) provides a ligand contact to ATP. 60–63 (DARN) provides a ligand contact to GTP.

Belongs to the RapZ-like family.

In terms of biological role, displays ATPase and GTPase activities. This Pseudomonas fluorescens (strain SBW25) protein is Nucleotide-binding protein PFLU_0879.